The sequence spans 61 residues: Probradykinin-1 (61 aa).

Residues 1 to 22 form the signal peptide; the sequence is MSFLKKSLFLVLFLGLVSFSIC. Positions 23-48 are excised as a propeptide; it reads EEEKRETEEEENKDETEEQSEEKKRF. The tract at residues 24-61 is disordered; that stretch reads EEKRETEEEENKDETEEQSEEKKRFEPVPPGFTPFRLT. A compositionally biased stretch (acidic residues) spans 30–42; sequence EEEENKDETEEQS.

The protein belongs to the frog skin active peptide (FSAP) family. Bradykinin-related peptide subfamily. In terms of tissue distribution, expressed by the skin glands.

It is found in the secreted. In terms of biological role, may produce in vitro relaxation of rat arterial smooth muscle and constriction of intestinal smooth muscle. May target bradykinin receptors (BDKRB). This chain is Probradykinin-1, found in Pithecopus azureus (Orange-legged monkey tree frog).